The primary structure comprises 147 residues: Angiogenin (147 aa).

A signal peptide spans 1–24 (MVMGLGVLLLVFVLGLGLTPPTLA). Gln-25 bears the Pyrrolidone carboxylic acid mark. His-37 serves as the catalytic Proton acceptor. Arg-45 and Asp-46 together coordinate tRNA. 3 disulfide bridges follow: Cys-50-Cys-105, Cys-63-Cys-116, and Cys-81-Cys-131. The Nucleolar localization signal signature appears at 55-59 (RRRGL). TRNA-binding residues include Cys-105 and Val-127. Residue His-138 is the Proton donor of the active site.

It belongs to the pancreatic ribonuclease family. Homodimer. Interacts with RNH1; inhibiting ANG ribonuclease activity. Interacts with PCNA.

It is found in the secreted. The protein localises to the nucleus. The protein resides in the nucleolus. It localises to the cytoplasm. Its subcellular location is the stress granule. Its activity is regulated as follows. Has weak tRNA ribonuclease activity by itself due to partial autoinhibition by its C-terminus, which folds into a short alpha-helix that partially occludes the substrate-binding site. In absence of stress, the ribonuclease activity is inhibited by RNH1 in the cytoplasm. In response to stress, dissociates from RNH1 in the cytoplasm and associates with cytoplasmic ribosomes with vacant A-sites: ribosomes directly activate the tRNA ribonuclease activity of ANG by refolding the C-terminal alpha-helix. In response to stress, the angiogenic activity of ANG is inhibited by RNH1 in the nucleus. In terms of biological role, secreted ribonuclease that can either promote or restrict cell proliferation of target cells, depending on the context. Endocytosed in target cells via its receptor PLXNB2 and translocates to the cytoplasm or nucleus. Under stress conditions, localizes to the cytoplasm and promotes the assembly of stress granules (SGs): specifically cleaves a subset of tRNAs within anticodon loops to produce tRNA-derived stress-induced fragments (tiRNAs), resulting in translation repression and inhibition of cell proliferation. tiRNas also prevent formation of apoptosome, thereby promoting cell survival. Preferentially cleaves RNAs between a pyrimidine and an adenosine residue, suggesting that it cleaves the anticodon loop of tRNA(Ala) (32-UUAGCAU-38) after positions 33 and 36. Cleaves a subset of tRNAs, including tRNA(Ala), tRNA(Glu), tRNA(Gly), tRNA(Lys), tRNA(Val), tRNA(His), tRNA(Asp) and tRNA(Sec). Under growth conditions and in differentiated cells, translocates to the nucleus and stimulates ribosomal RNA (rRNA) transcription, including that containing the initiation site sequences of 45S rRNA, thereby promoting cell growth and proliferation. Angiogenin induces vascularization of normal and malignant tissues via its ability to promote rRNA transcription. Involved in hematopoietic stem and progenitor cell (HSPC) growth and survival by promoting rRNA transcription in growth conditions and inhibiting translation in response to stress, respectively. Mediates the crosstalk between myeloid and intestinal epithelial cells to protect the intestinal epithelial barrier integrity: secreted by myeloid cells and promotes intestinal epithelial cells proliferation and survival. Also mediates osteoclast-endothelial cell crosstalk in growing bone: produced by osteoclasts and protects the neighboring vascular cells against senescence by promoting rRNA transcription. The chain is Angiogenin (ANG) from Gorilla gorilla gorilla (Western lowland gorilla).